An 801-amino-acid chain; its full sequence is MAALAEEQTEVAVKLEPEGPPTLLPPQAGDGAGEGSGGTPNNGPNGGGGGNVAVAAAAGGDGGTPKPGVAVSAAAPAGAAPVPAAPAEAGAPHDRQTLLAVLQFLRQSNLREAEEALRREARLLEEAVAGSGAPGELDGAGAEAASALLSRVTASVPGSAAPEPPGTGASVTSVFSGSASGPAAPGKVASVAVEDQPDVSAVLSAYNQQGDPTMYEEYYSGLKHFIECSLDCHRAELSQLFYPLFVHMYLELVYNQHENEAKSFFEKFHGDQECYYQDDLRVLSSLTKKEHMKGNETMLDFRTSKFVLRIYRDSYQLLKRHLQEKQNNQIWNIVQEHLYIDIFDGMPRSKQQIDAMVGSLAGEAKREANKSKVFFGLLKEPEIEVPLDDEDEEGENEEGKPKKKKPKKDSIGSKSKKQDPNAPPQNRIPLPELKDSDKLDKIMNMKETTKRVRLGPDCLPSICFYTFLNAYQGLTAVDVTDDSSLIAGGFADSTVRVWSVTPKKLRSVKQASDLSLIDKESDDVLERIMDEKTASELKILYGHSGPVYGASFSPDRNYLLSSSEDGTVRLWSLQTFTCLVGYKGHNYPVWDTQFSPYGYYFVSGGHDRVARLWATDHYQPLRIFAGHLADVNCTRYHPNSNYVATGSADRTVRLWDVLNGNCVRIFTGHKGPIHSLTFSPNGRFLATGATDGRVLLWDIGHGLMVGELKGHTDTVCSLRFSRDGEILASGSMDNTVRLWDAVKAFEDLETDDFTTATGHINLPENSQELLLGTYMTKSTPVVHLHFTRRNLVLAAGAYSPQ.

The disordered stretch occupies residues methionine 1–valine 69. A compositionally biased stretch (gly residues) spans aspartate 30 to asparagine 51. One can recognise a LisH domain in the interval histidine 93–glutamate 125. Disordered stretches follow at residues valine 156–serine 176 and valine 385–lysine 438. Over residues valine 385–asparagine 396 the composition is skewed to acidic residues. A compositionally biased stretch (basic and acidic residues) spans lysine 408–aspartate 419. WD repeat units follow at residues asparagine 469 to valine 508, glycine 542 to glycine 581, glycine 584 to alanine 625, glycine 626 to threonine 667, glycine 668 to glutamate 707, and glycine 710 to glutamate 749.

The protein belongs to the WD repeat TAF5 family. As to quaternary structure, homodimer. Component of the TFIID basal transcription factor complex, composed of TATA-box-binding protein TBP, and a number of TBP-associated factors (TAFs), including TAF1, TAF2, TAF3, TAF4, TAF5, TAF6, TAF7, TAF8, TAF9, TAF10, TAF11, TAF12 and TAF13. The TFIID complex structure can be divided into 3 modules TFIID-A, TFIID-B, and TFIID-C. TAF5 forms the TFIID-A module together with TAF3 and TBP, and in TFIID-B with TAF8. Component of the TFTC-HAT complex, at least composed of TAF5L, TAF6L, TADA3L, SUPT3H/SPT3, TAF2, TAF4, TAF5, GCN5L2/GCN5, TAF10 and TRRAP. TBP is not part of the TFTC-HAT complex. Interacts strongly with the histone H4-related TAF6 and the histone H3-related TAF9, as well as a stable complex comprised of both TAF6 and TAF9. Apparently weaker interactions with TBP, TAF1, TAF11, and TAF12, but not TAF7, also have been observed.

The protein resides in the nucleus. Its function is as follows. The TFIID basal transcription factor complex plays a major role in the initiation of RNA polymerase II (Pol II)-dependent transcription. TFIID recognizes and binds promoters with or without a TATA box via its subunit TBP, a TATA-box-binding protein, and promotes assembly of the pre-initiation complex (PIC). The TFIID complex consists of TBP and TBP-associated factors (TAFs), including TAF1, TAF2, TAF3, TAF4, TAF5, TAF6, TAF7, TAF8, TAF9, TAF10, TAF11, TAF12 and TAF13. The TFIID complex structure can be divided into 3 modules TFIID-A, TFIID-B, and TFIID-C. TAF5 is involved in two modules of TFIID, in TFIID-A together with TAF3 and TBP, and in TFIID-B with TAF8. Involved in contacts between TFIID and TFIIF in the PIC. This is Transcription initiation factor TFIID subunit 5 (Taf5) from Mus musculus (Mouse).